A 216-amino-acid chain; its full sequence is Orotate phosphoribosyltransferase (216 aa).

Lysine 30 is a 5-phospho-alpha-D-ribose 1-diphosphate binding site. 38 to 39 (FF) lines the orotate pocket. Residues 75-76 (YK), arginine 102, lysine 103, lysine 106, histidine 108, and 128-136 (DDVITAGTA) each bind 5-phospho-alpha-D-ribose 1-diphosphate. Residues threonine 132 and arginine 160 each coordinate orotate.

The protein belongs to the purine/pyrimidine phosphoribosyltransferase family. PyrE subfamily. Homodimer. Mg(2+) serves as cofactor.

It carries out the reaction orotidine 5'-phosphate + diphosphate = orotate + 5-phospho-alpha-D-ribose 1-diphosphate. The protein operates within pyrimidine metabolism; UMP biosynthesis via de novo pathway; UMP from orotate: step 1/2. Catalyzes the transfer of a ribosyl phosphate group from 5-phosphoribose 1-diphosphate to orotate, leading to the formation of orotidine monophosphate (OMP). This Acinetobacter baumannii (strain ACICU) protein is Orotate phosphoribosyltransferase.